Reading from the N-terminus, the 288-residue chain is Rhythmically expressed gene 5 protein (288 aa).

In terms of tissue distribution, expressed in head, but not in the body. Expression levels oscillate with the circadian rhythm.

Involved in the generation of biological rhythms (Potential). In the head, oscillates in abundance with a daily peak during early night, even under constant darkness. Oscillation is dependent on period (per) function. The polypeptide is Rhythmically expressed gene 5 protein (Reg-5) (Drosophila melanogaster (Fruit fly)).